The sequence spans 115 residues: MSLDPAIAARLKRNADGLFAAVTQERGTGKVLMVAWMDDDALARTLQTREATYFSRSRGEQWVKGATSGHTQKVHSVRLDCDGDTVLLEVDQVGGACHTGDHTCFDADLLLGPDE.

Aspartate 80 is a binding site for Mg(2+). Cysteine 81 provides a ligand contact to Zn(2+). 2 residues coordinate Mg(2+): aspartate 82 and aspartate 84. The Zn(2+) site is built by cysteine 97 and cysteine 104.

The protein belongs to the PRA-CH family. As to quaternary structure, homodimer. The cofactor is Mg(2+). Zn(2+) serves as cofactor.

The protein resides in the cytoplasm. It catalyses the reaction 1-(5-phospho-beta-D-ribosyl)-5'-AMP + H2O = 1-(5-phospho-beta-D-ribosyl)-5-[(5-phospho-beta-D-ribosylamino)methylideneamino]imidazole-4-carboxamide. It participates in amino-acid biosynthesis; L-histidine biosynthesis; L-histidine from 5-phospho-alpha-D-ribose 1-diphosphate: step 3/9. Its function is as follows. Catalyzes the hydrolysis of the adenine ring of phosphoribosyl-AMP. This is Phosphoribosyl-AMP cyclohydrolase from Mycolicibacterium smegmatis (strain ATCC 700084 / mc(2)155) (Mycobacterium smegmatis).